The sequence spans 121 residues: Small ribosomal subunit protein uS13 (121 aa).

The segment at 91 to 121 (HRRGLPVRGQKTKNNARTRKGPVKTVANKKK) is disordered.

Belongs to the universal ribosomal protein uS13 family. In terms of assembly, part of the 30S ribosomal subunit. Forms a loose heterodimer with protein S19. Forms two bridges to the 50S subunit in the 70S ribosome.

Functionally, located at the top of the head of the 30S subunit, it contacts several helices of the 16S rRNA. In the 70S ribosome it contacts the 23S rRNA (bridge B1a) and protein L5 of the 50S subunit (bridge B1b), connecting the 2 subunits; these bridges are implicated in subunit movement. Contacts the tRNAs in the A and P-sites. This is Small ribosomal subunit protein uS13 from Staphylococcus haemolyticus (strain JCSC1435).